Consider the following 500-residue polypeptide: MSSIEEIDTDETFTSDYVSARKDEVDDIITATTIAQKKMENSILEKLNSTENGNIIEKKKILNFLMNGIEKIPMSHQGLDSSKVWISFWILNGMDMLDSLDSYPNISSRASKYLSILQNDDNNGNNNNRENNQNGGGFGGGNSHTSHVVSTFAAVSALYVIGTEESYKTIDREAMYKFLMRMKTKEGAFTSEDGGEYDSRTTYCAIAVASMLNILTAELERGVVDFLLSCQTYEGGFGAYPFNEAHGGYTFCSVAALSILNSLHKIDMNSLHRWITYRQSNDGGFEGRTNKLVDTCYSYWQGAVYIIIQSYFNYYKKQQQDDGDGKEGDQQEEGLLFNQAKLQEYVIRFCQQSDKKYSGFSDHPHRGKDYYHTCYGLSGISLSQYNEIGKAIQSLNTFTNTFEQPSPPINKKSTNVFTISNNNNNNNNKNNNSDDNNNNSNNNNNNSENQLVEPVHPIYNIKLSKCEKGFEIDLFLFQKEFKDASVSLGTLFFYAKFILK.

Positions 117-140 (LQNDDNNGNNNNRENNQNGGGFGG) are disordered. Residues 119 to 133 (NDDNNGNNNNRENNQ) show a composition bias toward low complexity. 5 PFTB repeats span residues 121 to 162 (DNNG…YVIG), 172 to 213 (REAM…SMLN), 220 to 261 (ERGV…SILN), 268 to 309 (MNSL…IIIQ), and 343 to 384 (QEYV…SLSQ). (2E,6E)-farnesyl diphosphate is bound by residues 246–249 (HGGY) and 288–291 (RTNK). Zn(2+) is bound by residues Asp294 and Cys296. Residue 297–300 (YSYW) participates in (2E,6E)-farnesyl diphosphate binding. His372 lines the Zn(2+) pocket. The interval 402–451 (FEQPSPPINKKSTNVFTISNNNNNNNNKNNNSDDNNNNSNNNNNNSENQL) is disordered. Low complexity predominate over residues 420 to 449 (SNNNNNNNNKNNNSDDNNNNSNNNNNNSEN).

This sequence belongs to the protein prenyltransferase subunit beta family. In terms of assembly, heterodimer of fntA and fntB (farnesyltransferase). Heterodimer of an alpha and a beta subunit. It depends on Zn(2+) as a cofactor.

It catalyses the reaction L-cysteinyl-[protein] + (2E,6E)-farnesyl diphosphate = S-(2E,6E)-farnesyl-L-cysteinyl-[protein] + diphosphate. In terms of biological role, catalyzes the transfer of a farnesyl moiety from farnesyl diphosphate to a cysteine at the fourth position from the C-terminus of several proteins. The beta subunit is responsible for peptide-binding. The chain is Protein farnesyltransferase subunit beta (fntB) from Dictyostelium discoideum (Social amoeba).